The primary structure comprises 194 residues: Inosine triphosphate pyrophosphatase (194 aa).

Position 2 is an N-acetylalanine (Ala-2). 14-19 (TGNAKK) provides a ligand contact to ITP. Position 44 (Glu-44) interacts with Mg(2+). ITP-binding positions include Lys-56, 72-73 (DT), Lys-89, 149-152 (FGWD), Lys-172, and 177-178 (HR).

It belongs to the HAM1 NTPase family. In terms of assembly, homodimer. Mg(2+) is required as a cofactor. In terms of tissue distribution, ubiquitous. Highly expressed in heart, liver, sex glands, thyroid and adrenal gland.

It localises to the cytoplasm. It catalyses the reaction ITP + H2O = IMP + diphosphate + H(+). The enzyme catalyses dITP + H2O = dIMP + diphosphate + H(+). The catalysed reaction is XTP + H2O = XMP + diphosphate + H(+). It carries out the reaction N(6)-hydroxy-dATP + H2O = N(6)-hydroxy-dAMP + diphosphate + H(+). In terms of biological role, pyrophosphatase that hydrolyzes the non-canonical purine nucleotides inosine triphosphate (ITP), deoxyinosine triphosphate (dITP) as well as 2'-deoxy-N-6-hydroxylaminopurine triphosphate (dHAPTP) and xanthosine 5'-triphosphate (XTP) to their respective monophosphate derivatives. The enzyme does not distinguish between the deoxy- and ribose forms. Probably excludes non-canonical purines from RNA and DNA precursor pools, thus preventing their incorporation into RNA and DNA and avoiding chromosomal lesions. This is Inosine triphosphate pyrophosphatase from Homo sapiens (Human).